The sequence spans 186 residues: MRELDAINLTLEALGESRVMDINTSNPSAGLARSALARNRRGLLSTGFWFNVVEREVTPTADGFIKVPWNQLAVYDAGSDSKYGVRDGNLYDLMEQNQYFDSPVKLKIVLDLDFEDLPEHAAMWVANYTTAQVYLNDLGGDSNYANYAQEAERYKSMVLREHLRNQRFSTSKTRFARRIRRARFMV.

It belongs to the tail tubular protein gp11 family.

Its subcellular location is the virion. The catalysed reaction is alpha,alpha-trehalose + H2O = alpha-D-glucose + beta-D-glucose. Structural component of the tail, which functions as a receptor binding protein (RBP) and mediates the attachment to the host capsular exopolysaccharides. Displays a depolymerase activity that specifically degrades the polysaccharides of Klebsiella pneumoniae capsule, which allows the phage to reach the host cell membrane and bind the entry receptor. Hydrolyzes trehalose. This is Tail tubular protein A from Klebsiella phage KP34 (Bacteriophage KP34).